The sequence spans 469 residues: MKSTVEQLSPTRVRINVEVPFTELEPDFDRAFKELAKQVRLPGFRPGKAPRKLLEARIGRGAVLEQVVNDALPSRYSEAVSTSDLKPLGQPEIEITKLEDNEELVFTAEVDIRPEITLPELESLKITVDPIEVTDEEVDAELQSLRARFGTLKGVERGVQEGDFVSIDLSATVDGNEVPEAATEGLSHEVGSGQLIDGLDEAIIGLKADESKTFTTKLVAGEYAGQDAEVTVTVKSVKERELPEPDDEFAQLASEYDTIEELRNSLVDQVRRLKSVQQAEQIRDKAIEALLEQTEVPLPEKIVQAQIDEVVHNAIHGLDHDEEKFAEQLAEQGSSREEFDAETRTEAEKAVKTQLLMDAVADKLEIQVSQNDLTERLVLMSRQYGLEPQQLIQILQQNNQLPAMFADVRRGLTIAAVVHAATVTDTDGNVIDTMEFFGPSGEQAAEDSAEESTDAAEGEAAEDADDTDK.

One can recognise a PPIase FKBP-type domain in the interval 162–243 (GDFVSIDLSA…VKSVKERELP (82 aa)). A disordered region spans residues 438-469 (GPSGEQAAEDSAEESTDAAEGEAAEDADDTDK). Residues 444-469 (AAEDSAEESTDAAEGEAAEDADDTDK) are compositionally biased toward acidic residues.

The protein belongs to the FKBP-type PPIase family. Tig subfamily.

It localises to the cytoplasm. The catalysed reaction is [protein]-peptidylproline (omega=180) = [protein]-peptidylproline (omega=0). In terms of biological role, involved in protein export. Acts as a chaperone by maintaining the newly synthesized protein in an open conformation. Functions as a peptidyl-prolyl cis-trans isomerase. This is Trigger factor from Mycolicibacterium smegmatis (strain ATCC 700084 / mc(2)155) (Mycobacterium smegmatis).